The chain runs to 185 residues: Peptidyl-tRNA hydrolase (185 aa).

Residue Tyr-14 coordinates tRNA. Residue His-19 is the Proton acceptor of the active site. 3 residues coordinate tRNA: Phe-64, Asn-66, and Asn-112.

This sequence belongs to the PTH family. As to quaternary structure, monomer.

It localises to the cytoplasm. It catalyses the reaction an N-acyl-L-alpha-aminoacyl-tRNA + H2O = an N-acyl-L-amino acid + a tRNA + H(+). Its function is as follows. Hydrolyzes ribosome-free peptidyl-tRNAs (with 1 or more amino acids incorporated), which drop off the ribosome during protein synthesis, or as a result of ribosome stalling. Functionally, catalyzes the release of premature peptidyl moieties from peptidyl-tRNA molecules trapped in stalled 50S ribosomal subunits, and thus maintains levels of free tRNAs and 50S ribosomes. In Lactobacillus johnsonii (strain CNCM I-12250 / La1 / NCC 533), this protein is Peptidyl-tRNA hydrolase.